The sequence spans 491 residues: Cholesterol 22-monohydroxylase CYP90B51 (491 aa).

A helical membrane pass occupies residues Ile6–Ile26. A heme-binding site is contributed by Cys437.

The protein belongs to the cytochrome P450 family. In terms of tissue distribution, mainly expressed in leaves and seed pods and, to a lower extent, in flowers and stems.

The protein resides in the membrane. The catalysed reaction is cholesterol + reduced [NADPH--hemoprotein reductase] + O2 = (22S)-22-hydroxycholesterol + oxidized [NADPH--hemoprotein reductase] + H2O + H(+). It functions in the pathway steroid metabolism; cholesterol metabolism. Functionally, canonical brassinosteroid (BR)-biosynthetic enzyme capable of converting cholesterol to 22S-hydroxycholesterol via sterol-C22 hydroxylation. The polypeptide is Cholesterol 22-monohydroxylase CYP90B51 (Trigonella foenum-graecum (Fenugreek)).